The following is an 897-amino-acid chain: 3'-5' exonuclease DinG (897 aa).

One can recognise an Exonuclease domain in the interval 8 to 161 (VVDLETTGNQ…DEDAATTAKL (154 aa)). Residues 241–496 (SKAVDQLGLT…KAIDQLEKQR (256 aa)) form the Helicase ATP-binding domain. 276–283 (ASLGSGKS) serves as a coordination point for ATP. Residues 448–451 (DEAH) carry the DEAH box motif. One can recognise a Helicase C-terminal domain in the interval 703–883 (NIDEYVASIV…NYRQKKGDIQ (181 aa)).

The protein belongs to the helicase family. DinG subfamily. Type 2 sub-subfamily.

Functionally, 3'-5' exonuclease. This chain is 3'-5' exonuclease DinG, found in Staphylococcus aureus (strain bovine RF122 / ET3-1).